The sequence spans 388 residues: Succinate--CoA ligase [ADP-forming] subunit beta (388 aa).

In terms of domain architecture, ATP-grasp spans 9–244 (KEILRKFGVA…LDEEDPAEIE (236 aa)). ATP contacts are provided by residues K46, 53-55 (GRG), E99, A102, and E107. The Mg(2+) site is built by N199 and D213. Substrate-binding positions include N264 and 321 to 323 (GIM).

Belongs to the succinate/malate CoA ligase beta subunit family. In terms of assembly, heterotetramer of two alpha and two beta subunits. Requires Mg(2+) as cofactor.

It catalyses the reaction succinate + ATP + CoA = succinyl-CoA + ADP + phosphate. The enzyme catalyses GTP + succinate + CoA = succinyl-CoA + GDP + phosphate. It participates in carbohydrate metabolism; tricarboxylic acid cycle; succinate from succinyl-CoA (ligase route): step 1/1. Its function is as follows. Succinyl-CoA synthetase functions in the citric acid cycle (TCA), coupling the hydrolysis of succinyl-CoA to the synthesis of either ATP or GTP and thus represents the only step of substrate-level phosphorylation in the TCA. The beta subunit provides nucleotide specificity of the enzyme and binds the substrate succinate, while the binding sites for coenzyme A and phosphate are found in the alpha subunit. This is Succinate--CoA ligase [ADP-forming] subunit beta from Burkholderia lata (strain ATCC 17760 / DSM 23089 / LMG 22485 / NCIMB 9086 / R18194 / 383).